The sequence spans 470 residues: 6-phospho-beta-galactosidase (470 aa).

5 residues coordinate D-galactose 6-phosphate: Gln19, His116, Asn159, Glu160, and Asn297. Glu160 (proton donor) is an active-site residue. Glu375 functions as the Nucleophile in the catalytic mechanism. D-galactose 6-phosphate-binding residues include Ser430, Trp431, Lys437, and Tyr439.

It belongs to the glycosyl hydrolase 1 family.

It carries out the reaction a 6-phospho-beta-D-galactoside + H2O = D-galactose 6-phosphate + an alcohol. It functions in the pathway carbohydrate metabolism; lactose degradation; D-galactose 6-phosphate and beta-D-glucose from lactose 6-phosphate: step 1/1. This Staphylococcus aureus (strain MRSA252) protein is 6-phospho-beta-galactosidase.